A 193-amino-acid chain; its full sequence is Tellurium resistance protein TerZ (193 aa).

It belongs to the CAPAB/TerDEXZ family.

Its function is as follows. Not known; seems to contribute to the tellurium resistance (Ter) mechanism. Also involved in phage inhibition (Phi) and colicin resistance (PacB). The polypeptide is Tellurium resistance protein TerZ (terZ) (Serratia marcescens).